The sequence spans 618 residues: Sphingomyelin phosphodiesterase 2 (618 aa).

The N-terminal stretch at 1–22 (MQQPLIILGIGIVLALVSNVES) is a signal peptide. A Saposin B-type domain is found at 68-151 (RKMSCLFCTF…AFIANCGHSD (84 aa)). Intrachain disulfides connect cysteine 72-cysteine 147, cysteine 75-cysteine 140, and cysteine 103-cysteine 114. Asparagine 89 carries N-linked (GlcNAc...) asparagine glycosylation. An N-linked (GlcNAc...) asparagine glycan is attached at asparagine 159. Aspartate 189 and histidine 191 together coordinate Zn(2+). Disulfide bonds link cysteine 204–cysteine 216 and cysteine 217–cysteine 249. Aspartate 278 serves as a coordination point for Zn(2+). Asparagine 298 carries N-linked (GlcNAc...) asparagine glycosylation. Residues asparagine 318, histidine 427, histidine 461, and histidine 463 each contribute to the Zn(2+) site. Cysteine 387 and cysteine 435 are disulfide-bonded. 2 N-linked (GlcNAc...) asparagine glycosylation sites follow: asparagine 525 and asparagine 568. 2 disulfide bridges follow: cysteine 588-cysteine 594 and cysteine 600-cysteine 613.

Belongs to the acid sphingomyelinase family. Zn(2+) serves as cofactor.

The protein resides in the secreted. It catalyses the reaction a sphingomyelin + H2O = phosphocholine + an N-acylsphing-4-enine + H(+). The enzyme catalyses an N-acyl-15-methylhexadecasphing-4-enine-1-phosphocholine + H2O = an N-acyl-15-methylhexadecasphing-4-enine + phosphocholine + H(+). It participates in lipid metabolism; sphingolipid metabolism. Its function is as follows. Sphingomyelin phosphodiesterase (sphingomyelinase) that converts sphingomyelin (N-acyl-sphingoid-1-phosphocholine) to ceramide (N-acyl-sphingoid base) and phosphocholine at acidic pH. Displays its enzymatic activity when secreted. May play distinct roles in signaling. The sequence is that of Sphingomyelin phosphodiesterase 2 (asm-2) from Caenorhabditis elegans.